A 150-amino-acid polypeptide reads, in one-letter code: FAD synthase (150 aa).

Residues 11–12 (TF), 16–19 (HPGH), aspartate 96, and tyrosine 124 contribute to the ATP site.

The protein belongs to the archaeal FAD synthase family. Homodimer. A divalent metal cation is required as a cofactor.

The catalysed reaction is FMN + ATP + H(+) = FAD + diphosphate. It functions in the pathway cofactor biosynthesis; FAD biosynthesis; FAD from FMN: step 1/1. Its function is as follows. Catalyzes the transfer of the AMP portion of ATP to flavin mononucleotide (FMN) to produce flavin adenine dinucleotide (FAD) coenzyme. The polypeptide is FAD synthase (Methanococcus maripaludis (strain DSM 14266 / JCM 13030 / NBRC 101832 / S2 / LL)).